A 540-amino-acid chain; its full sequence is Membrane protein insertase YidC (540 aa).

A run of 5 helical transmembrane segments spans residues 1-21 (MVVQ…MMLD), 351-371 (NWGI…FPLT), 418-438 (LGGC…YYML), 464-484 (ILPI…PSSI), and 497-517 (PLIF…YYII).

The protein belongs to the OXA1/ALB3/YidC family. Type 1 subfamily. As to quaternary structure, interacts with the Sec translocase complex via SecD. Specifically interacts with transmembrane segments of nascent integral membrane proteins during membrane integration.

Its subcellular location is the cell membrane. In terms of biological role, required for the insertion and/or proper folding and/or complex formation of integral membrane proteins into the membrane. Involved in integration of membrane proteins that insert both dependently and independently of the Sec translocase complex, as well as at least some lipoproteins. Aids folding of multispanning membrane proteins. This Wigglesworthia glossinidia brevipalpis protein is Membrane protein insertase YidC.